Consider the following 183-residue polypeptide: uncharacterized protein (183 aa).

Residues 7–23 form a helical membrane-spanning segment; sequence LFFTALCFGLTGCIAPP.

It localises to the membrane. This is an uncharacterized protein from Haemophilus influenzae (strain ATCC 51907 / DSM 11121 / KW20 / Rd).